A 476-amino-acid chain; its full sequence is UDP-glycosyltransferase 71C3 (476 aa).

Residues Ser290, 349 to 351 (APQ), 366 to 374 (HCGWNSVLE), and 388 to 391 (YAEQ) each bind UDP-alpha-D-glucose.

This sequence belongs to the UDP-glycosyltransferase family.

Functionally, possesses low quercetin 3-O-glucosyltransferase activity in vitro. This Arabidopsis thaliana (Mouse-ear cress) protein is UDP-glycosyltransferase 71C3 (UGT71C3).